Consider the following 354-residue polypeptide: RNA 3'-terminal phosphate cyclase (354 aa).

Residues glutamine 100 and 290–293 each bind ATP; that span reads HMGD. The active-site Tele-AMP-histidine intermediate is histidine 316.

The protein belongs to the RNA 3'-terminal cyclase family. Type 1 subfamily.

It is found in the cytoplasm. It carries out the reaction a 3'-end 3'-phospho-ribonucleotide-RNA + ATP = a 3'-end 2',3'-cyclophospho-ribonucleotide-RNA + AMP + diphosphate. Catalyzes the conversion of 3'-phosphate to a 2',3'-cyclic phosphodiester at the end of RNA. The mechanism of action of the enzyme occurs in 3 steps: (A) adenylation of the enzyme by ATP; (B) transfer of adenylate to an RNA-N3'P to produce RNA-N3'PP5'A; (C) and attack of the adjacent 2'-hydroxyl on the 3'-phosphorus in the diester linkage to produce the cyclic end product. The biological role of this enzyme is unknown but it is likely to function in some aspects of cellular RNA processing. In Caldivirga maquilingensis (strain ATCC 700844 / DSM 13496 / JCM 10307 / IC-167), this protein is RNA 3'-terminal phosphate cyclase.